The sequence spans 85 residues: Sodium channel neurotoxin MeuNaTxalpha-2 (85 aa).

Residues 1–19 form the signal peptide; that stretch reads MNYLVMISLALLLMTGVES. In terms of domain architecture, LCN-type CS-alpha/beta spans 21 to 83; sequence RDAYIANDRN…VPIRIPGECR (63 aa). 4 disulfides stabilise this stretch: cysteine 31–cysteine 82, cysteine 35–cysteine 55, cysteine 41–cysteine 65, and cysteine 45–cysteine 67. An Arginine amide modification is found at arginine 83.

The protein belongs to the long (4 C-C) scorpion toxin superfamily. Sodium channel inhibitor family. Alpha subfamily. In terms of tissue distribution, expressed by the venom gland.

Its subcellular location is the secreted. In terms of biological role, alpha toxins bind voltage-independently at site-3 of sodium channels (Nav) and inhibit the inactivation of the activated channels, thereby blocking neuronal transmission. This toxin inhibits inactivation of Nav1.4/SCN4A (EC(50)=2.23 uM) and drosophila DmNav1 (EC(50)=220 nM). The toxin (1 uM) does not significantly shift the midpoint of activation at the two channels, but induces a significant depolarizing shift in the V(1/2) of inactivation of the channels. In addition, the toxin accelerates the recovery from fast inactivation in Nav1.4/SCN4A and DmNav1. It also shows antimicrobial activity. This chain is Sodium channel neurotoxin MeuNaTxalpha-2, found in Mesobuthus eupeus (Lesser Asian scorpion).